Consider the following 258-residue polypeptide: MMFKNFPFFKGKKDTSFDHLVEEVKKGYIPEHIAIIMDGNGRWAKRRAMPRIAGHHEGMQVVKKITKFASKLNVKVLTLYAFSTENWKRPKKEVDYLMQLPEEFLGTFLPELIEENVQVRVIGQQDRLPTHTRRAMEKAMEETKENTGLILNFALNYGSRDEIVSAVQHMMKDSEEGKVRVEDVSEEMLSSYLMTSSLPDPELLIRTSGELRISNFMLWQIAYSEFWFTDVYWPDFTEEHLLNAITDFQHRGRRFGGV.

Residue Asp38 is part of the active site. Asp38 serves as a coordination point for Mg(2+). Substrate contacts are provided by residues 39 to 42, Trp43, Arg51, His55, and 83 to 85; these read GNGR and STE. Residue Asn86 is the Proton acceptor of the active site. Residues Trp87, Arg89, Arg206, and 212-214 contribute to the substrate site; that span reads RIS. Glu225 serves as a coordination point for Mg(2+).

The protein belongs to the UPP synthase family. As to quaternary structure, homodimer. Mg(2+) is required as a cofactor.

Its function is as follows. Catalyzes the condensation of isopentenyl diphosphate (IPP) with allylic pyrophosphates generating different type of terpenoids. This is Isoprenyl transferase from Bacillus anthracis.